A 78-amino-acid chain; its full sequence is Large ribosomal subunit protein bL28 (78 aa).

The segment at 1–23 is disordered; the sequence is MSRVCQVTGKKPMVGNNRSHAKN.

The protein belongs to the bacterial ribosomal protein bL28 family.

This is Large ribosomal subunit protein bL28 from Shewanella sediminis (strain HAW-EB3).